A 432-amino-acid polypeptide reads, in one-letter code: Short transient receptor potential channel 2 homolog (432 aa).

4 helical membrane passes run M1–A21, F52–I72, F96–V116, and L162–I182. The interval Q356–T432 is disordered. A compositionally biased stretch (low complexity) spans A387–A404.

It belongs to the transient receptor (TC 1.A.4) family. STrpC subfamily. TRPC2 sub-subfamily.

The protein localises to the membrane. Functionally, thought to form a receptor-activated calcium permeant cation channel. This chain is Short transient receptor potential channel 2 homolog (TRPC2), found in Bos taurus (Bovine).